The primary structure comprises 151 residues: Ribosome maturation factor RimP (151 aa).

It belongs to the RimP family.

It is found in the cytoplasm. Required for maturation of 30S ribosomal subunits. This chain is Ribosome maturation factor RimP, found in Mannheimia succiniciproducens (strain KCTC 0769BP / MBEL55E).